The chain runs to 747 residues: Cyclic di-GMP phosphodiesterase PdeF (747 aa).

Over 1–14 (MKLNATYIKIRDKW) the chain is Periplasmic. A helical transmembrane segment spans residues 15 to 36 (WGLPLFLPSLILPIFAHINTFA). The Cytoplasmic portion of the chain corresponds to 37 to 42 (HISSGE). The helical transmembrane segment at 43 to 65 (VFLFYLPLALMISMMMFFSWAAL) threads the bilayer. At 66–79 (PGIALGIFVRKYAE) the chain is on the periplasmic side. A helical membrane pass occupies residues 80–102 (LGFYETLSLTANFIIIIILCWGG). At 103-128 (YRVFTPRRNNVSHGDTRLISQRIFWQ) the chain is on the cytoplasmic side. A helical transmembrane segment spans residues 129-151 (IVFPATLFLILFQFAAFVGLLAS). The Periplasmic portion of the chain corresponds to 152–165 (RENLVGVMPFNLGT). A helical membrane pass occupies residues 166–188 (LINYQALLVGNLIGVPLCYFIIR). Residues 189 to 215 (VVRNPFYLRSYYSQLKQQVDAKVTKKE) are Cytoplasmic-facing. Residues 216-235 (FALWLLALGALLLLLCMPLN) traverse the membrane as a helical segment. The Periplasmic portion of the chain corresponds to 236–239 (EKST). The helical transmembrane segment at 240-259 (IFSTNYTLSLLLPLMMWGAM) threads the bilayer. Topologically, residues 260 to 265 (RYGYKL) are cytoplasmic. Residues 266–285 (ISLLWAVVLMISIHSYQNYI) traverse the membrane as a helical segment. Residues 286 to 294 (PIYPGYTTQ) are Periplasmic-facing. The helical transmembrane segment at 295-317 (LTITSSSYLVFSFIVNYMAVLAT) threads the bilayer. At 318-747 (RQRAVVRRIQ…NEIEPIRESA (430 aa)) the chain is on the cytoplasmic side. Residues 493–744 (KVAMMNRLQQ…DTLNEIEPIR (252 aa)) enclose the EAL domain.

The cofactor is Mg(2+). It depends on Mn(2+) as a cofactor.

Its subcellular location is the cell inner membrane. The catalysed reaction is 3',3'-c-di-GMP + H2O = 5'-phosphoguanylyl(3'-&gt;5')guanosine + H(+). Inhibited by pGpG. Its function is as follows. Phosphodiesterase (PDE) that catalyzes the hydrolysis of cyclic-di-GMP (c-di-GMP) to 5'-pGpG. Truncated proteins consisting of the GGDEF/EAL domains (residues 319-747) or of the EAL domain alone (481-747) have c-di-GMP phosphodiesterase activity. They do not have diguanylate cyclase activity. Cyclic-di-GMP is a second messenger which controls cell surface-associated traits in bacteria. This Escherichia coli (strain K12) protein is Cyclic di-GMP phosphodiesterase PdeF.